Here is a 142-residue protein sequence, read N- to C-terminus: Transcriptional regulator MraZ (142 aa).

SpoVT-AbrB domains lie at 5-47 and 76-119; these read THTP…PTPE and AHDE…DRVA.

Belongs to the MraZ family. In terms of assembly, forms oligomers.

The protein localises to the cytoplasm. It is found in the nucleoid. The polypeptide is Transcriptional regulator MraZ (Salinispora tropica (strain ATCC BAA-916 / DSM 44818 / JCM 13857 / NBRC 105044 / CNB-440)).